We begin with the raw amino-acid sequence, 499 residues long: Gypsy retrotransposon integrase-like protein 1 (499 aa).

The Integrase catalytic domain maps to 113–270; the sequence is KVENPWSIVT…TPYFQMFNRN (158 aa).

This Bos taurus (Bovine) protein is Gypsy retrotransposon integrase-like protein 1 (GIN1).